A 205-amino-acid polypeptide reads, in one-letter code: Urease accessory protein UreG (205 aa).

Residue 14–21 participates in GTP binding; that stretch reads GPVGSGKT.

Belongs to the SIMIBI class G3E GTPase family. UreG subfamily. In terms of assembly, homodimer. UreD, UreF and UreG form a complex that acts as a GTP-hydrolysis-dependent molecular chaperone, activating the urease apoprotein by helping to assemble the nickel containing metallocenter of UreC. The UreE protein probably delivers the nickel.

Its subcellular location is the cytoplasm. Its function is as follows. Facilitates the functional incorporation of the urease nickel metallocenter. This process requires GTP hydrolysis, probably effectuated by UreG. This chain is Urease accessory protein UreG, found in Escherichia coli O157:H7.